We begin with the raw amino-acid sequence, 334 residues long: MTKVYYDQSVEKDALQGKKIAIIGYGSQGHAHAQNLKDNGYDVIVGIRPGHSFDKAKEDGFDVYPVAEAVKQADVIMVLLPDEIQGNVYKNEIEPNLEAGNALAFAHGFNIHFEVIKPPKDVDVFLVAPKGPGHLVRRTFVEGTAVPALFGVQQDATGQARDISLSYAKGIGATRAGVIETTFKEETETDLFGEQAVLCGGIHKLIQSGFETLVEAGYQKELAYFEVLHEMKLIVDLMYEGGMENVRYSISNTAEYGDYVSGPRVITPDVKDNMKAVLKDIQNGNFANSFVKDNENGFKEFYKLREQQHGHEIEAVGRELRKMMPFIKSKSIQK.

Residues 2–181 (TKVYYDQSVE…GATRAGVIET (180 aa)) enclose the KARI N-terminal Rossmann domain. Residues 25–28 (YGSQ), Arg-48, Ser-52, and 82–85 (DEIQ) contribute to the NADP(+) site. His-107 is an active-site residue. Gly-133 contacts NADP(+). The 146-residue stretch at 182-327 (TFKEETETDL…RELRKMMPFI (146 aa)) folds into the KARI C-terminal knotted domain. Mg(2+) is bound by residues Asp-190, Glu-194, Glu-226, and Glu-230. A substrate-binding site is contributed by Ser-251.

The protein belongs to the ketol-acid reductoisomerase family. Mg(2+) serves as cofactor.

It carries out the reaction (2R)-2,3-dihydroxy-3-methylbutanoate + NADP(+) = (2S)-2-acetolactate + NADPH + H(+). It catalyses the reaction (2R,3R)-2,3-dihydroxy-3-methylpentanoate + NADP(+) = (S)-2-ethyl-2-hydroxy-3-oxobutanoate + NADPH + H(+). It functions in the pathway amino-acid biosynthesis; L-isoleucine biosynthesis; L-isoleucine from 2-oxobutanoate: step 2/4. Its pathway is amino-acid biosynthesis; L-valine biosynthesis; L-valine from pyruvate: step 2/4. In terms of biological role, involved in the biosynthesis of branched-chain amino acids (BCAA). Catalyzes an alkyl-migration followed by a ketol-acid reduction of (S)-2-acetolactate (S2AL) to yield (R)-2,3-dihydroxy-isovalerate. In the isomerase reaction, S2AL is rearranged via a Mg-dependent methyl migration to produce 3-hydroxy-3-methyl-2-ketobutyrate (HMKB). In the reductase reaction, this 2-ketoacid undergoes a metal-dependent reduction by NADPH to yield (R)-2,3-dihydroxy-isovalerate. The sequence is that of Ketol-acid reductoisomerase (NADP(+)) from Staphylococcus haemolyticus (strain JCSC1435).